Here is a 539-residue protein sequence, read N- to C-terminus: CTP synthase (539 aa).

Residues 1 to 267 are amidoligase domain; that stretch reads MKEAKFIFVT…GTQVLEHFHL (267 aa). CTP is bound at residue Ser15. UTP is bound at residue Ser15. ATP is bound by residues 16–21 and Asp73; that span reads SLGKGL. Mg(2+)-binding residues include Asp73 and Glu141. CTP is bound by residues 148-150, 188-193, and Lys224; these read DIE and KTKPTQ. UTP-binding positions include 188–193 and Lys224; that span reads KTKPTQ. Residues 292–536 form the Glutamine amidotransferase type-1 domain; sequence TVSIVGKYTE…IKAVVNKVKK (245 aa). An L-glutamine-binding site is contributed by Gly359. Residue Cys386 is the Nucleophile; for glutamine hydrolysis of the active site. L-glutamine is bound by residues 387–390, Glu410, and Arg464; that span reads LGMQ. Active-site residues include His509 and Glu511.

Belongs to the CTP synthase family. In terms of assembly, homotetramer.

It carries out the reaction UTP + L-glutamine + ATP + H2O = CTP + L-glutamate + ADP + phosphate + 2 H(+). It catalyses the reaction L-glutamine + H2O = L-glutamate + NH4(+). The catalysed reaction is UTP + NH4(+) + ATP = CTP + ADP + phosphate + 2 H(+). It participates in pyrimidine metabolism; CTP biosynthesis via de novo pathway; CTP from UDP: step 2/2. With respect to regulation, allosterically activated by GTP, when glutamine is the substrate; GTP has no effect on the reaction when ammonia is the substrate. The allosteric effector GTP functions by stabilizing the protein conformation that binds the tetrahedral intermediate(s) formed during glutamine hydrolysis. Inhibited by the product CTP, via allosteric rather than competitive inhibition. In terms of biological role, catalyzes the ATP-dependent amination of UTP to CTP with either L-glutamine or ammonia as the source of nitrogen. Regulates intracellular CTP levels through interactions with the four ribonucleotide triphosphates. The sequence is that of CTP synthase from Wolbachia sp. subsp. Brugia malayi (strain TRS).